The following is a 491-amino-acid chain: Feruloyl-CoA synthase (491 aa).

Position 154 (Thr-154) interacts with Mg(2+). Ala-199, Gly-291, and Thr-295 together coordinate ATP. Glu-296 lines the Mg(2+) pocket. Residues Asp-374 and Lys-391 each contribute to the ATP site.

This sequence belongs to the ATP-dependent AMP-binding enzyme family. The cofactor is Mg(2+).

The catalysed reaction is (E)-ferulate + ATP + CoA = (E)-feruloyl-CoA + AMP + diphosphate. Functionally, catalyzes the formation of (E)-feruloyl-CoA, AMP and diphosphate from (E)-ferulate, CoA and ATP. Involved in the degradation pathway of lignin-derived aromatic compounds of plant cell walls. Catalyzes the first enzymatic step in the conversion of ferulic acid into high value compound vanillin. In Amycolatopsis sp, this protein is Feruloyl-CoA synthase.